Reading from the N-terminus, the 102-residue chain is Large ribosomal subunit protein bL21 (102 aa).

It belongs to the bacterial ribosomal protein bL21 family. Part of the 50S ribosomal subunit. Contacts protein L20.

This protein binds to 23S rRNA in the presence of protein L20. This Phytoplasma mali (strain AT) protein is Large ribosomal subunit protein bL21.